The chain runs to 376 residues: Erythronate-4-phosphate dehydrogenase (376 aa).

2 residues coordinate substrate: S45 and T66. NAD(+) contacts are provided by residues 126–127, D146, T174, 201–203, and D227; these read QV and ASR. The active site involves R203. Residue E232 is part of the active site. The Proton donor role is filled by H249. Residue G252 coordinates NAD(+). Y253 contributes to the substrate binding site.

It belongs to the D-isomer specific 2-hydroxyacid dehydrogenase family. PdxB subfamily. Homodimer.

It localises to the cytoplasm. It catalyses the reaction 4-phospho-D-erythronate + NAD(+) = (R)-3-hydroxy-2-oxo-4-phosphooxybutanoate + NADH + H(+). The protein operates within cofactor biosynthesis; pyridoxine 5'-phosphate biosynthesis; pyridoxine 5'-phosphate from D-erythrose 4-phosphate: step 2/5. In terms of biological role, catalyzes the oxidation of erythronate-4-phosphate to 3-hydroxy-2-oxo-4-phosphonooxybutanoate. This chain is Erythronate-4-phosphate dehydrogenase, found in Ectopseudomonas mendocina (strain ymp) (Pseudomonas mendocina).